We begin with the raw amino-acid sequence, 956 residues long: MSDIRKWFMKAHEKGNGSAPKSTSSKAGPVKNAAETAPIKSEQASEDLETADRRKTSKYFGKDKTKVKDEKEVEAIPAKRKLKTESDDLVKPRPRKVTKVVDDDDDDFDVPISRKTRDTTPSKKLKSGSGRGIASKTVDNDDDDDGEDKETPLKSAGRGRGGRAAPGASTGGRGRGGGRGGFMNFGERKDPPHKGEKEVPEGTPDCLAGLTFVISGTLDSLEREEAEDLIKRHGGRITGSVSKKTTYLLCDEDIGGRKSEKAKELGTKFLTEDGLFDIIRSSKPVKKSLPERSNKGTEKICAPPKTSPQKEETRGKPLAKSSPKKVPPAKGKNKIIETSLPWTEKYRPKVPNEIVGNQSLVTQLHNWLSHWHDQFGGTGSKGKGKKLNDAGSKKAVLLSGTPGIGKTTSAKLVSQMLGFQAVEVNASDSRGKANSNIAKGIGGSNANSVKELVNNEAMAANFDRSKHPKTVLIMDEVDGMSAGDRGGVADLIASIKISKIPIICICNDRYSQKLKSLVNYCLPLNYRKPTKQQMAKRLMHIAKAEGLEINEIALEELAERVNGDIRLAVNQLQYMSLSMSVIKYDDIRQRLLSSAKDEDISPFTAVDKLFGYNGGKLRMDERIDLSMSDPDLVPLLIQENYLNYRPSGKDEAKRMDLLARAAESIADGDIINVQIRRYRQWQLSQSCCVASSILPASLLHGSREVLEQGERNFNRFGGWLGKNSTAGKNRRLMEDLHVHVLASRESSAGRETLRVDYLPLLLSRLTSPLQTLPKDEAVSEVVDFMNSYSISQEDFDTILELGKFKGRENPMEGVPPPVKAALTKKYNEMNKTRMVRVADMVQLPGVKKAPKKRIAAMLEPTVDSLRDEDGEPLADNEEGNGSDAEEDSEEATDGEKLESNLKNLNARGIQVELDLKGAGSSGSRKAAGKGRGRGKAADTSAEKKATGRGSGAKRKR.

2 stretches are compositionally biased toward basic and acidic residues: residues 1–15 (MSDI…HEKG) and 50–74 (TADR…KEVE). Disordered stretches follow at residues 1 to 206 (MSDI…TPDC) and 286 to 332 (KKSL…AKGK). Positions 158 to 183 (RGRGGRAAPGASTGGRGRGGGRGGFM) are enriched in gly residues. 2 stretches are compositionally biased toward basic and acidic residues: residues 186–200 (GERK…KEVP) and 288–298 (SLPERSNKGTE). Residues 202–292 (GTPDCLAGLT…KPVKKSLPER (91 aa)) enclose the BRCT domain. 399-406 (SGTPGIGK) contributes to the ATP binding site. The tract at residues 858-956 (LEPTVDSLRD…GRGSGAKRKR (99 aa)) is disordered. Residues 866 to 892 (RDEDGEPLADNEEGNGSDAEEDSEEAT) show a composition bias toward acidic residues. Over residues 916 to 925 (KGAGSSGSRK) the composition is skewed to low complexity.

It belongs to the activator 1 large subunit family. In terms of assembly, heterotetramer of subunits RFC2, RFC3, RFC4 and RFC5 that can form a complex with RFC1. In terms of tissue distribution, expressed at high levels in flowers and siliques, and at lower levels in roots, stems and leaves.

It is found in the nucleus. In terms of biological role, plays a role as mediator of transcriptional gene silencing (TGS), DNA replication, DNA repair, hypersensitive response (HR) and telomere length regulation. Is required in meiosis for DNA double-strand break (DSB) repair during meiotic homologous recombination. May participate in the RAD51-mediated recombination intermediate repair process. Is important for lagging strand synthesis. Promotes meiotic recombination via a specific pathway for crossovers (COs) that involves the formation of double Holliday Junction (dHJ) intermediates. The protein is Replication factor C subunit 1 (RFC1) of Arabidopsis thaliana (Mouse-ear cress).